A 556-amino-acid polypeptide reads, in one-letter code: Urocanate hydratase (556 aa).

Residues 52–53, Gln-130, 176–178, Glu-196, Arg-201, 242–243, 263–267, 273–274, and Tyr-322 each bind NAD(+); these read GG, GMG, NA, QTSAH, and YL. The active site involves Cys-410. Gly-492 provides a ligand contact to NAD(+).

The protein belongs to the urocanase family. Requires NAD(+) as cofactor.

The protein resides in the cytoplasm. The enzyme catalyses 4-imidazolone-5-propanoate = trans-urocanate + H2O. The protein operates within amino-acid degradation; L-histidine degradation into L-glutamate; N-formimidoyl-L-glutamate from L-histidine: step 2/3. Functionally, catalyzes the conversion of urocanate to 4-imidazolone-5-propionate. The polypeptide is Urocanate hydratase (Shewanella sp. (strain MR-7)).